Consider the following 556-residue polypeptide: Guanosine-diphosphatase (556 aa).

Topologically, residues 1 to 12 (MTPTMKSIARRK) are cytoplasmic. A helical; Signal-anchor for type II membrane protein transmembrane segment spans residues 13 to 33 (ALLIALSIFAVTFILWNGFPG). Residues 34–556 (SSNRPLPSSN…GWNCNVKEEI (523 aa)) lie on the Lumenal side of the membrane. Glutamate 256 functions as the Proton acceptor in the catalytic mechanism. N-linked (GlcNAc...) asparagine glycosylation is present at asparagine 372.

The protein belongs to the GDA1/CD39 NTPase family. Ca(2+) serves as cofactor. The cofactor is Mn(2+).

It localises to the golgi apparatus membrane. It carries out the reaction GDP + H2O = GMP + phosphate + H(+). The protein operates within protein modification; protein glycosylation. Functionally, after transfer of sugars to endogenous macromolecular acceptors, the enzyme converts nucleoside diphosphates to nucleoside monophosphates which in turn exit the Golgi lumen in a coupled antiporter reaction, allowing entry of additional nucleotide sugar from the cytosol. This Schizosaccharomyces pombe (strain 972 / ATCC 24843) (Fission yeast) protein is Guanosine-diphosphatase (gdp1).